The sequence spans 498 residues: L-ornithine N(5)-monooxygenase (498 aa).

Residues 80 to 88 and Gln-99 each bind FAD; that span reads ERQKQFAWH. A substrate-binding site is contributed by Lys-104. Val-165 contributes to the FAD binding site. NADP(+) is bound by residues 251 to 254 and Arg-276; that span reads SGQS. Substrate is bound by residues 290–293 and Asn-320; that span reads NEVF. 320-322 contacts NADP(+); that stretch reads NYS. 463 to 465 is an FAD binding site; sequence SLL. Ser-466 contacts substrate.

This sequence belongs to the lysine N(6)-hydroxylase/L-ornithine N(5)-oxygenase family. Homotetramer. FAD serves as cofactor.

The enzyme catalyses L-ornithine + NADPH + O2 = N(5)-hydroxy-L-ornithine + NADP(+) + H2O. It carries out the reaction L-ornithine + NADH + O2 = N(5)-hydroxy-L-ornithine + NAD(+) + H2O. It functions in the pathway siderophore biosynthesis. Its function is as follows. Catalyzes the conversion of L-ornithine to N(5)-hydroxyornithine, the first step in the biosynthesis of all hydroxamate-containing siderophores, such as the secreted triacetylfusarinine C (TAFC) involved in iron uptake and the intracellular iron storage compound desferriferricrocin (DFFC). The chain is L-ornithine N(5)-monooxygenase from Emericella nidulans (strain FGSC A4 / ATCC 38163 / CBS 112.46 / NRRL 194 / M139) (Aspergillus nidulans).